Here is a 218-residue protein sequence, read N- to C-terminus: Pyridoxine/pyridoxamine 5'-phosphate oxidase (218 aa).

Residues 14 to 17 (RREY) and lysine 72 contribute to the substrate site. FMN is bound by residues 67–72 (RIVLLK), 82–83 (YT), arginine 88, lysine 89, and glutamine 111. The substrate site is built by tyrosine 129, arginine 133, and serine 137. Residues 146 to 147 (QS) and tryptophan 191 each bind FMN. Position 197 to 199 (197 to 199 (RLH)) interacts with substrate. Arginine 201 is a binding site for FMN.

It belongs to the pyridoxamine 5'-phosphate oxidase family. Homodimer. FMN serves as cofactor.

It carries out the reaction pyridoxamine 5'-phosphate + O2 + H2O = pyridoxal 5'-phosphate + H2O2 + NH4(+). It catalyses the reaction pyridoxine 5'-phosphate + O2 = pyridoxal 5'-phosphate + H2O2. It participates in cofactor metabolism; pyridoxal 5'-phosphate salvage; pyridoxal 5'-phosphate from pyridoxamine 5'-phosphate: step 1/1. It functions in the pathway cofactor metabolism; pyridoxal 5'-phosphate salvage; pyridoxal 5'-phosphate from pyridoxine 5'-phosphate: step 1/1. Catalyzes the oxidation of either pyridoxine 5'-phosphate (PNP) or pyridoxamine 5'-phosphate (PMP) into pyridoxal 5'-phosphate (PLP). This chain is Pyridoxine/pyridoxamine 5'-phosphate oxidase, found in Escherichia coli O157:H7.